The chain runs to 275 residues: Methylglyoxal reductase DkgA (275 aa).

Tyr51 functions as the Proton donor in the catalytic mechanism. His107 contributes to the substrate binding site. An NADP(+)-binding site is contributed by 187 to 241 (SPLAQGGEGVFDQKVIRELADKYGKTPAQIVIRWHLDCGLVVIPKSVTPSRIAEN).

The protein belongs to the aldo/keto reductase family. Monomer.

Its subcellular location is the cytoplasm. The enzyme catalyses hydroxyacetone + NADP(+) = methylglyoxal + NADPH + H(+). Its function is as follows. Aldo-keto reductase that significantly contributes to cellular methylglyoxal detoxification by catalyzing the NADPH-dependent conversion of methylglyoxal to acetol. This chain is Methylglyoxal reductase DkgA, found in Salmonella typhimurium (strain LT2 / SGSC1412 / ATCC 700720).